A 292-amino-acid polypeptide reads, in one-letter code: RWD domain-containing protein 2A (292 aa).

Residues 14-134 (LEMEMLFSMF…QWLQDNSASY (121 aa)) form the RWD domain.

This is RWD domain-containing protein 2A (RWDD2A) from Homo sapiens (Human).